Reading from the N-terminus, the 159-residue chain is 17 kDa surface antigen (159 aa).

Residues 1 to 19 (MKLLSKIMIIALAASMLQA) form the signal peptide. C20 is lipidated: N-palmitoyl cysteine. A lipid anchor (S-diacylglycerol cysteine) is attached at C20.

This sequence belongs to the rickettsiale 17 kDa surface antigen family.

It localises to the cell outer membrane. The polypeptide is 17 kDa surface antigen (omp) (Rickettsia prowazekii (strain Madrid E)).